The following is a 2789-amino-acid chain: Testis-expressed protein 15 (2789 aa).

Residues 34-46 (HNNTGSSTVTTSK) show a composition bias toward polar residues. 5 disordered regions span residues 34 to 99 (HNNT…SSEV), 169 to 191 (ENQN…AYTK), 1063 to 1166 (FSSK…EHQP), 2303 to 2331 (KNIS…DTTV), and 2351 to 2379 (KATF…DSLK). Over residues 47-59 (SIKDPRLMRREES) the composition is skewed to basic and acidic residues. Residues 80–98 (DNVNSEIKSTPSNSASSSE) are compositionally biased toward polar residues. Residues 170-179 (NQNHSEEKAQ) are compositionally biased toward basic and acidic residues. Residues 1063–1077 (FSSKRKYDKRRKKRA) show a composition bias toward basic residues. Low complexity-rich tracts occupy residues 1106–1116 (RKSMASSVSKS) and 1134–1160 (SQLP…NPSL).

Belongs to the TEX15 family. In terms of assembly, interacts with PIWIL4 and PIWIL2. Expressed in testis, predominantly in germ cells. Low expression, if any, in ovary. Also expressed in several cancers.

The protein localises to the cytoplasm. It localises to the nucleus. Required during spermatogenesis for normal chromosome synapsis and meiotic recombination in germ cells. Necessary for formation of DMC1 and RAD51 foci on meiotic chromosomes, suggesting a specific role in DNA double-stranded break repair. Essential executor of PIWIL4-piRNA pathway directed transposon DNA methylation and silencing in the male embryonic germ cells. PIWIL4-piRNA binds to nascent transposon transcripts and interacts with TEX15, which may in turn recruit the epigenetic silencing machinery to the transposon loci. Not required for piRNA biosynthesis. The sequence is that of Testis-expressed protein 15 (TEX15) from Homo sapiens (Human).